Here is a 596-residue protein sequence, read N- to C-terminus: Bromodomain-containing protein 9 (596 aa).

The span at 1–10 shows a compositional bias: basic residues; the sequence is MGKKHKKHKS. 2 disordered regions span residues 1-31 and 49-119; these read MGKKHKKHKSEWRSYDAGELGSPGDQSQYYV and EVTE…SEGE. The segment covering 61 to 73 has biased composition (basic and acidic residues); sequence SFYEDRSDHERER. A compositionally biased stretch (basic residues) spans 74 to 84; sequence HKEKKKKKKKK. The segment covering 85 to 98 has biased composition (basic and acidic residues); sequence SEKEKDKYLDEDER. Basic residues predominate over residues 99–109; that stretch reads RRRKEEKKRKR. Residues 148–252 form the Bromo domain; it reads NESTPLQQLL…HTGFKMMSKQ (105 aa). The tract at residues 226–228 is histone H4K5ac H4K8ac and histone H4K5bu H4K8bu binding; that stretch reads TYN. The span at 537–547 shows a compositional bias: basic and acidic residues; the sequence is DFHDVHNDRGG. The interval 537 to 596 is disordered; that stretch reads DFHDVHNDRGGSRPSSSSSVSNNSERDHHLGSPSRISVGEQQDIHDPYEFLQSPETENQN. Residues 548–559 are compositionally biased toward low complexity; that stretch reads SRPSSSSSVSNN.

As to quaternary structure, binds acetylated histones H3 and H4. Binds butyrylated histone H4.

It is found in the nucleus. Plays a role in chromatin remodeling and regulation of transcription. Acts as a chromatin reader that recognizes and binds acylated histones: binds histones that are acetylated and/or butyrylated. The protein is Bromodomain-containing protein 9 (brd9) of Xenopus tropicalis (Western clawed frog).